A 643-amino-acid chain; its full sequence is Conglutin alpha 2 (643 aa).

The N-terminal stretch at 1–22 (MAKPCLFSFSLCLLLLSSLCLA) is a signal peptide. 2 disulfide bridges follow: Cys-31-Cys-64 and Cys-107-Cys-464. In terms of domain architecture, Cupin type-1 1 spans 36–261 (LNALEPDNRV…AFNVDEEIIN (226 aa)). Disordered regions lie at residues 110-142 (TYEE…DSHQ), 190-243 (PRRF…VLSG), and 285-458 (PKSQ…SRNG). A compositionally biased stretch (low complexity) spans 207–218 (QEQQGQQREQQQ). Basic and acidic residues-rich tracts occupy residues 228–237 (HQQEQEEEGK) and 298–313 (PRQR…RREE). The segment covering 314–323 (EKEEEEEEDE) has biased composition (acidic residues). Composition is skewed to basic and acidic residues over residues 324–333 (PRSRERYERQ) and 357–369 (QEGR…WERT). The segment covering 422 to 433 (RGRHGGRGRRSG) has biased composition (basic residues). The Cupin type-1 2 domain occupies 470–616 (ENIAKPSRAD…AFGLRLNQVS (147 aa)). The span at 623 to 632 (NQGPLVSPQS) shows a compositional bias: polar residues. A disordered region spans residues 623 to 643 (NQGPLVSPQSESEDHTLPKVA). Residues 634–643 (SEDHTLPKVA) are compositionally biased toward basic and acidic residues.

Belongs to the 11S seed storage protein (globulins) family. As to quaternary structure, hexamer; each subunit is composed of an acidic and a basic chain derived from a single precursor and linked by a disulfide bond. Component of globulins complexes which accumulate in seeds.

Its function is as follows. Sulfur-rich seed storage protein. This protein found in the seeds of many leguminous and non-leguminous plants is the source of sulfur-containing amino acids in seed meals. The sequence is that of Conglutin alpha 2 from Lupinus angustifolius (Narrow-leaved blue lupine).